The following is a 234-amino-acid chain: bZIP transcription factor 1 (234 aa).

Residues 67-134 are disordered; that stretch reads RAQSDGSNAL…DKQRNAQQQL (68 aa). Residues 70–86 are compositionally biased toward polar residues; it reads SDGSNALLSSIGPSGTT. The segment covering 88 to 128 has biased composition (basic and acidic residues); that stretch reads RPRDEMDCFTDTHKHKRGDGNKSRRREQCRANQARYRDKQR. Residues 106–169 form the bZIP domain; the sequence is DGNKSRRREQ…RTNQSPWNTV (64 aa). Residues 109 to 128 form a basic motif region; sequence KSRRREQCRANQARYRDKQR. The segment at 134 to 155 is leucine-zipper; the sequence is LERSVEQLQSELSTLKHRNLDL.

This sequence belongs to the bZIP family. As to quaternary structure, interacts with PKZ1.

The protein localises to the nucleus. Functionally, required for normal zoospore movement, formation of appressoria by germinated zoospore cysts and plant infection. The sequence is that of bZIP transcription factor 1 from Phytophthora infestans (Potato late blight agent).